The chain runs to 954 residues: MVLLKWLVCQLVFFTAFSHAFTDYLLKKCAQSGFCHRNRVYAENIAKSHHCYYKVDAESIAHDPLENVLHATIIKTIPRLEGDDIAVQFPFSLSFLQDHSVRFTINEKERMPTNSSGLLISSQRFNETWKYAFDKKFQEEANRTSIPQFHFLKQKQTVNSFWSKISSFLSLSNSTADTFHLRNGDVSVEIFAEPFQLKVYWQNALKLIVNEQNFLNIEHHRTKQENFAHVLPEETTFNMFKDNFLYSKHDSMPLGPESVALDFSFMGSTNVYGIPEHATSLRLMDTSGGKEPYRLFNVDVFEYNIGTSQPMYGSIPFMFSSSSTSIFWVNAADTWVDIKYDTSKNKTMTHWISENGVIDVVMSLGPDIPTIIDKFTDLTGRPFLPPISSIGYHQCRWNYNDEMDVLTVDSQMDAHMIPYDFIWLDLEYTNDKKYFTWKQHSFPNPKRLLSKLKKLGRNLVVLIDPHLKKDYEISDRVINENVAVKDHNGNDYVGHCWPGNSIWIDTISKYGQKIWKSFFERFMDLPADLTNLFIWNDMNEPSIFDGPETTAPKDLIHDNYIEERSVHNIYGLSVHEATYDAIKSIYSPSDKRPFLLTRAFFAGSQRTAATWTGDNVANWDYLKISIPMVLSNNIAGMPFIGADIAGFAEDPTPELIARWYQAGLWYPFFRAHAHIDTKRREPYLFNEPLKSIVRDIIQLRYFLLPTLYTMFHKSSVTGFPIMNPMFIEHPEFAELYHIDNQFYWSNSGLLVKPVTEPGQSETEMVFPPGIFYEFASLHSFINNGTDLIEKNISAPLDKIPLFIEGGHIITMKDKYRRSSMLMKNDPYVIVIAPDTEGRAVGDLYVDDGETFGYQRGEYVETQFIFENNTLKNVRSHIPENLTGIHHNTLRNTNIEKIIIAKNNLQHNITLKDSIKVKKNGEESSLPTRSSYENDNKITILNLSLDITEDWEVIF.

An N-terminal signal peptide occupies residues 1-22 (MVLLKWLVCQLVFFTAFSHAFT). N-linked (GlcNAc...) asparagine glycans are attached at residues asparagine 114, asparagine 126, asparagine 142, asparagine 173, and asparagine 345. The active-site Nucleophile is aspartate 537. The active site involves glutamate 540. Aspartate 614 (proton donor) is an active-site residue. Asparagine 783, asparagine 791, asparagine 867, asparagine 880, asparagine 907, and asparagine 941 each carry an N-linked (GlcNAc...) asparagine glycan.

The protein belongs to the glycosyl hydrolase 31 family. In terms of assembly, heterodimer of a catalytic subunit alpha (ROT2) and a subunit beta (GTB1).

It is found in the endoplasmic reticulum. The enzyme catalyses N(4)-(alpha-D-Glc-(1-&gt;3)-alpha-D-Man-(1-&gt;2)-alpha-D-Man-(1-&gt;2)-alpha-D-Man-(1-&gt;3)-[alpha-D-Man-(1-&gt;2)-alpha-D-Man-(1-&gt;3)-[alpha-D-Man-(1-&gt;2)-alpha-D-Man-(1-&gt;6)]-alpha-D-Man-(1-&gt;6)]-beta-D-Man-(1-&gt;4)-beta-D-GlcNAc-(1-&gt;4)-beta-D-GlcNAc)-L-asparaginyl-[protein] + H2O = N(4)-(alpha-D-Man-(1-&gt;2)-alpha-D-Man-(1-&gt;2)-alpha-D-Man-(1-&gt;3)-[alpha-D-Man-(1-&gt;2)-alpha-D-Man-(1-&gt;3)-[alpha-D-Man-(1-&gt;2)-alpha-D-Man-(1-&gt;6)]-alpha-D-Man-(1-&gt;6)]-beta-D-Man-(1-&gt;4)-beta-D-GlcNAc-(1-&gt;4)-beta-D-GlcNAc)-L-asparaginyl-[protein] (N-glucan mannose isomer 9A1,2,3B1,2,3) + beta-D-glucose. It carries out the reaction N(4)-(alpha-D-Glc-(1-&gt;3)-alpha-D-Glc-(1-&gt;3)-alpha-D-Man-(1-&gt;2)-alpha-D-Man-(1-&gt;2)-alpha-D-Man-(1-&gt;3)-[alpha-D-Man-(1-&gt;2)-alpha-D-Man-(1-&gt;3)-[alpha-D-Man-(1-&gt;2)-alpha-D-Man-(1-&gt;6)]-alpha-D-Man-(1-&gt;6)]-beta-D-Man-(1-&gt;4)-beta-D-GlcNAc-(1-&gt;4)-beta-D-GlcNAc)-L-asparaginyl-[protein] + H2O = N(4)-(alpha-D-Glc-(1-&gt;3)-alpha-D-Man-(1-&gt;2)-alpha-D-Man-(1-&gt;2)-alpha-D-Man-(1-&gt;3)-[alpha-D-Man-(1-&gt;2)-alpha-D-Man-(1-&gt;3)-[alpha-D-Man-(1-&gt;2)-alpha-D-Man-(1-&gt;6)]-alpha-D-Man-(1-&gt;6)]-beta-D-Man-(1-&gt;4)-beta-D-GlcNAc-(1-&gt;4)-beta-D-GlcNAc)-L-asparaginyl-[protein] + beta-D-glucose. It participates in glycan metabolism; N-glycan metabolism. Inhibited by glucose, maltose and nigerose, and by the antibiotic deoxynojirimycin. Its function is as follows. Catalytic subunit of glucosidase 2, which cleaves sequentially the 2 innermost alpha-1,3-linked glucose residues from the Glc(2)Man(9)GlcNAc(2) oligosaccharide precursor of immature glycoproteins. The polypeptide is Glucosidase 2 subunit alpha (ROT2) (Saccharomyces cerevisiae (strain ATCC 204508 / S288c) (Baker's yeast)).